Consider the following 473-residue polypeptide: Probable serine/threonine-protein kinase glkA (473 aa).

The disordered stretch occupies residues 1–84; sequence MTIPTDNNSS…QSSSTATVNS (84 aa). Residues 7–84 are compositionally biased toward low complexity; that stretch reads NNSSNNKGYN…QSSSTATVNS (78 aa). The region spanning 91 to 366 is the Protein kinase domain; the sequence is YEIIKQVGQG…IDEIIAHPFL (276 aa). ATP-binding positions include 97 to 105 and Lys-119; that span reads VGQGTFGKV. The active-site Proton acceptor is the Asp-208. Disordered stretches follow at residues 389–418 and 437–473; these read GKSS…SNNK and SSNL…TNTI. Over residues 442–466 the composition is skewed to low complexity; that stretch reads SIDNSNNGKSSSSSNNIPSLNNSNN.

Belongs to the protein kinase superfamily. CMGC Ser/Thr protein kinase family. GSK-3 subfamily.

The enzyme catalyses L-seryl-[tau protein] + ATP = O-phospho-L-seryl-[tau protein] + ADP + H(+). It carries out the reaction L-threonyl-[tau protein] + ATP = O-phospho-L-threonyl-[tau protein] + ADP + H(+). This Dictyostelium discoideum (Social amoeba) protein is Probable serine/threonine-protein kinase glkA (glkA).